The following is a 152-amino-acid chain: Interleukin-1 family member 10 (152 aa).

This sequence belongs to the IL-1 family. As to quaternary structure, interacts with cargo receptor TMED10; the interaction mediates the translocation from the cytoplasm into the ERGIC (endoplasmic reticulum-Golgi intermediate compartment) and thereby secretion. In terms of tissue distribution, expressed in fetal skin, spleen and tonsil. Expressed mostly in the basal epithelia of skin and in proliferating B-cells of the tonsil.

It is found in the cytoplasm. Its subcellular location is the secreted. Its function is as follows. Cytokine with immunomodulatory activity. Alone, does not induce cytokine production, but reduces IL22 and IL17A production by T-cells in response to heat-killed Candida albicans. Reduces IL36G-induced production of IL8 by peripheral blood mononuclear cells. Increases IL6 production by dendritic cells stimulated by bacterial lipopolysaccharides (LPS). Ligand for IL-36R/IL1RL2. This Homo sapiens (Human) protein is Interleukin-1 family member 10.